A 156-amino-acid chain; its full sequence is Large ribosomal subunit protein uL22 (156 aa).

Residues 114–156 (VESRPKQEKGGKAGASKASSRAARAQGSKAAAAKKTESKGGTS) are disordered. Residues 127–146 (GASKASSRAARAQGSKAAAA) are compositionally biased toward low complexity. The segment covering 147–156 (KKTESKGGTS) has biased composition (basic and acidic residues).

This sequence belongs to the universal ribosomal protein uL22 family. As to quaternary structure, part of the 50S ribosomal subunit.

This protein binds specifically to 23S rRNA; its binding is stimulated by other ribosomal proteins, e.g. L4, L17, and L20. It is important during the early stages of 50S assembly. It makes multiple contacts with different domains of the 23S rRNA in the assembled 50S subunit and ribosome. In terms of biological role, the globular domain of the protein is located near the polypeptide exit tunnel on the outside of the subunit, while an extended beta-hairpin is found that lines the wall of the exit tunnel in the center of the 70S ribosome. The polypeptide is Large ribosomal subunit protein uL22 (Mycobacteroides abscessus (strain ATCC 19977 / DSM 44196 / CCUG 20993 / CIP 104536 / JCM 13569 / NCTC 13031 / TMC 1543 / L948) (Mycobacterium abscessus)).